Here is a 279-residue protein sequence, read N- to C-terminus: Bis(5'-nucleosyl)-tetraphosphatase, symmetrical (279 aa).

The protein belongs to the Ap4A hydrolase family.

It catalyses the reaction P(1),P(4)-bis(5'-adenosyl) tetraphosphate + H2O = 2 ADP + 2 H(+). Its function is as follows. Hydrolyzes diadenosine 5',5'''-P1,P4-tetraphosphate to yield ADP. The polypeptide is Bis(5'-nucleosyl)-tetraphosphatase, symmetrical (Edwardsiella ictaluri (strain 93-146)).